The primary structure comprises 441 residues: Damage-control phosphatase ARMT1 (441 aa).

A2 bears the N-acetylalanine mark. N6-acetyllysine is present on K40. S102 is modified (phosphoserine). Residues D253 and N254 each coordinate Mn(2+). 253–254 (DN) is a substrate binding site. Residues E258 and D291 each contribute to the S-adenosyl-L-methionine site. D291 is a Mn(2+) binding site. Residues 367–371 (DLNYR) and K404 each bind substrate. The short motif at 401 to 404 (RTLK) is the Subfamily III RTxK motif element.

This sequence belongs to the damage-control phosphatase family. Sugar phosphate phosphatase III subfamily. Mn(2+) is required as a cofactor. Requires Ni(2+) as cofactor. Post-translationally, automethylated.

The enzyme catalyses beta-D-fructose 1-phosphate + H2O = D-fructose + phosphate. It catalyses the reaction beta-D-fructose 6-phosphate = dihydroxyacetone + D-glyceraldehyde 3-phosphate. It carries out the reaction L-glutamyl-[protein] + S-adenosyl-L-methionine = [protein]-L-glutamate 5-O-methyl ester + S-adenosyl-L-homocysteine. Functionally, metal-dependent phosphatase that shows phosphatase activity against several substrates, including fructose-1-phosphate and fructose-6-phosphate. Its preference for fructose-1-phosphate, a strong glycating agent that causes DNA damage rather than a canonical yeast metabolite, suggests a damage-control function in hexose phosphate metabolism. Has also been shown to have O-methyltransferase activity that methylates glutamate residues of target proteins to form gamma-glutamyl methyl ester residues. Possibly methylates PCNA, suggesting it is involved in the DNA damage response. The chain is Damage-control phosphatase ARMT1 from Macaca fascicularis (Crab-eating macaque).